Here is a 317-residue protein sequence, read N- to C-terminus: Lactamase-like protein adaB (317 aa).

Zn(2+) contacts are provided by His-97, His-99, Asp-101, and His-102. Asp-101 serves as the catalytic Proton donor/acceptor.

The protein belongs to the metallo-beta-lactamase superfamily. The cofactor is Zn(2+).

The catalysed reaction is 3-(2,4-dioxopentyl)-2,3,6,8,9-pentahydroxy-1-oxo-1,2,3,4-tetrahydroanthracene-2-carboxyl-[ACP] = 2-acetyl-3,4a,8,10,11,12a-hexahydroxy-1,4,4a,5,12,12a-hexahydrotetracene-1,12-dione + holo-[ACP] + H(+). It functions in the pathway secondary metabolite biosynthesis. Its function is as follows. Lactamase-like protein; part of the gene cluster that mediates the biosynthesis of the linear tetracyclic TAN-1612 neuropeptide Y receptor antagonist. The decaketide backbone of TAN-1612 is synthesized by the non-reducing polyketide synthase adaA via condensation of one acetyl-CoA starter unit with 9 malonyl-CoA units. The FAD-dependent monooxygenase adaC then performs hydroxylation at C2 while the polaketide chain is still attached to the NRPKS adaA. The alpha-hydroxylation step at C2 appears to be crucial for the following C18-C1 Claisen cyclization and release of the C9-hydroxyl version of TAN-1612 from the NRPKS adaA, two steps performed by the lactamase-like protein adaB. Finally, the O-methyltransferase adaD performs the C9 O-methylation to complete the biosynthesis of TAN-1612. The sequence is that of Lactamase-like protein adaB from Aspergillus niger (strain ATCC MYA-4892 / CBS 513.88 / FGSC A1513).